The sequence spans 213 residues: Imidazoleglycerol-phosphate dehydratase (213 aa).

Belongs to the imidazoleglycerol-phosphate dehydratase family.

The protein localises to the cytoplasm. The catalysed reaction is D-erythro-1-(imidazol-4-yl)glycerol 3-phosphate = 3-(imidazol-4-yl)-2-oxopropyl phosphate + H2O. Its pathway is amino-acid biosynthesis; L-histidine biosynthesis; L-histidine from 5-phospho-alpha-D-ribose 1-diphosphate: step 6/9. The sequence is that of Imidazoleglycerol-phosphate dehydratase from Trichodesmium erythraeum (strain IMS101).